Here is a 283-residue protein sequence, read N- to C-terminus: Pantothenate synthetase 2 (283 aa).

34–41 (MGALHDGH) is an ATP binding site. Catalysis depends on His41, which acts as the Proton donor. Gln65 provides a ligand contact to (R)-pantoate. Beta-alanine is bound at residue Gln65. An ATP-binding site is contributed by 152-155 (GEKD). Position 158 (Gln158) interacts with (R)-pantoate. ATP-binding positions include Val181 and 189 to 192 (MSSR).

It belongs to the pantothenate synthetase family. Homodimer.

Its subcellular location is the cytoplasm. It catalyses the reaction (R)-pantoate + beta-alanine + ATP = (R)-pantothenate + AMP + diphosphate + H(+). It participates in cofactor biosynthesis; (R)-pantothenate biosynthesis; (R)-pantothenate from (R)-pantoate and beta-alanine: step 1/1. Functionally, catalyzes the condensation of pantoate with beta-alanine in an ATP-dependent reaction via a pantoyl-adenylate intermediate. This is Pantothenate synthetase 2 from Bradyrhizobium diazoefficiens (strain JCM 10833 / BCRC 13528 / IAM 13628 / NBRC 14792 / USDA 110).